A 389-amino-acid chain; its full sequence is Apoptosis inhibitor U19 (389 aa).

It belongs to the beta-herpesvirinae UL38 protein family. Interacts with host MDM2; this interaction leads to the stabilization of host TP53.

It is found in the host cytoplasm. The protein resides in the host nucleus. Plays a role in the inhibition of host apoptosis to facilitate efficient viral replication. Promotes stabilization and inactivation of host TP53 through interaction with host MDM2. The protein is Apoptosis inhibitor U19 (U19) of Homo sapiens (Human).